Consider the following 427-residue polypeptide: Protein adenylyltransferase Fic (427 aa).

Residues leucine 17–phenylalanine 37 form a helical membrane-spanning segment. TPR repeat units lie at residues alanine 77–histidine 110 and proline 111–aspartate 143. Residues serine 200–glycine 205 carry the Inhibitory (S/T)XXXE(G/N) motif motif. Residues glutamate 204 and valine 286–histidine 289 each bind ATP. The region spanning isoleucine 255 to arginine 390 is the Fido domain. Residue histidine 333 is part of the active site. ATP contacts are provided by residues aspartate 337–arginine 344, tyrosine 369–tyrosine 370, and asparagine 377.

The protein belongs to the fic family. Homodimer.

Its subcellular location is the membrane. It carries out the reaction L-tyrosyl-[protein] + ATP = O-(5'-adenylyl)-L-tyrosyl-[protein] + diphosphate. The enzyme catalyses L-threonyl-[protein] + ATP = 3-O-(5'-adenylyl)-L-threonyl-[protein] + diphosphate. It catalyses the reaction 3-O-(5'-adenylyl)-L-threonyl-[protein] + H2O = L-threonyl-[protein] + AMP + H(+). The side chain of Glu-204 determines which of the two opposing activities (AMPylase or de-AMPylase) will take place. In response to endoplasmic reticulum stress, mediates de-AMPylase activity. Adenylyltransferase activity is inhibited by the inhibitory helix present at the N-terminus: Glu-204 binds ATP and competes with ATP-binding at Arg-344, thereby preventing adenylyltransferase activity. In unstressed cells, disengagement of Glu-204 promotes adenylyltransferase activity. Activation dissociates ATP-binding from Glu-204, allowing ordered binding of the entire ATP moiety with the alpha-phosphate in an orientation that is productive for accepting an incoming target hydroxyl side chain. Protein that can both mediate the addition of adenosine 5'-monophosphate (AMP) to specific residues of target proteins (AMPylation), and the removal of the same modification from target proteins (de-AMPylation), depending on the context. The side chain of Glu-204 determines which of the two opposing activities (AMPylase or de-AMPylase) will take place. Acts as a key regulator of the unfolded protein response (UPR) by mediating AMPylation or de-AMPylation of Hsc70-3/BiP. In unstressed cells, acts as an adenylyltransferase by mediating AMPylation of Hsc70-3/BiP, thereby inactivating it. In response to endoplasmic reticulum stress, acts as a phosphodiesterase by mediating removal of ATP (de-AMPylation) from Hsc70-3/BiP, leading to restore HSPA5/BiP activity. The protein is Protein adenylyltransferase Fic of Nematostella vectensis (Starlet sea anemone).